Here is a 131-residue protein sequence, read N- to C-terminus: Neurophysin 2 (131 aa).

Cystine bridges form between Cys-10–Cys-55, Cys-13–Cys-27, Cys-21–Cys-45, Cys-28–Cys-35, Cys-62–Cys-74, Cys-68–Cys-86, and Cys-75–Cys-80.

Belongs to the vasopressin/oxytocin family.

The protein localises to the secreted. Functionally, neurophysin 2 specifically binds vasopressin. The polypeptide is Neurophysin 2 (Anser anser anser (Western greylag goose)).